Consider the following 332-residue polypeptide: UDP-N-acetylenolpyruvoylglucosamine reductase (332 aa).

Positions 55–221 (VGGAADLYVA…TQATLQLAPG (167 aa)) constitute an FAD-binding PCMH-type domain. Residue R200 is part of the active site. Catalysis depends on S251, which acts as the Proton donor. The active site involves E321.

This sequence belongs to the MurB family. FAD is required as a cofactor.

The protein resides in the cytoplasm. It carries out the reaction UDP-N-acetyl-alpha-D-muramate + NADP(+) = UDP-N-acetyl-3-O-(1-carboxyvinyl)-alpha-D-glucosamine + NADPH + H(+). The protein operates within cell wall biogenesis; peptidoglycan biosynthesis. Cell wall formation. The sequence is that of UDP-N-acetylenolpyruvoylglucosamine reductase from Nostoc punctiforme (strain ATCC 29133 / PCC 73102).